The primary structure comprises 290 residues: HTH-type transcriptional activator RhaR (290 aa).

One can recognise an HTH araC/xylS-type domain in the interval 179-277; sequence DLIMSALQQS…GMTPRDYRQR (99 aa). 2 DNA-binding regions (H-T-H motif) span residues 196-217 and 244-267; these read ANFC…RQQT and ISDI…TREA.

Binds DNA as a dimer.

The protein resides in the cytoplasm. Functionally, activates expression of the rhaSR operon in response to L-rhamnose. This Yersinia pseudotuberculosis serotype O:3 (strain YPIII) protein is HTH-type transcriptional activator RhaR.